Reading from the N-terminus, the 395-residue chain is Putative 8-amino-7-oxononanoate synthase (395 aa).

Arg-22 is a binding site for substrate. 109–110 (GY) provides a ligand contact to pyridoxal 5'-phosphate. His-139 contacts substrate. Pyridoxal 5'-phosphate-binding positions include Ser-187, 212–215 (DEAH), and 241–244 (TFSK). An N6-(pyridoxal phosphate)lysine modification is found at Lys-244. Thr-358 provides a ligand contact to substrate.

Belongs to the class-II pyridoxal-phosphate-dependent aminotransferase family. BioF subfamily. As to quaternary structure, homodimer. Pyridoxal 5'-phosphate is required as a cofactor.

The enzyme catalyses 6-carboxyhexanoyl-[ACP] + L-alanine + H(+) = (8S)-8-amino-7-oxononanoate + holo-[ACP] + CO2. It participates in cofactor biosynthesis; biotin biosynthesis. Its function is as follows. Catalyzes the decarboxylative condensation of pimeloyl-[acyl-carrier protein] and L-alanine to produce 8-amino-7-oxononanoate (AON), [acyl-carrier protein], and carbon dioxide. This is Putative 8-amino-7-oxononanoate synthase (bioF) from Magnetococcus marinus (strain ATCC BAA-1437 / JCM 17883 / MC-1).